The primary structure comprises 663 residues: DNA ligase (663 aa).

NAD(+) contacts are provided by residues 31 to 35 (DFEFD), 80 to 81 (SL), and Glu110. Lys112 functions as the N6-AMP-lysine intermediate in the catalytic mechanism. Residues Arg133, Glu170, Lys285, and Lys309 each contribute to the NAD(+) site. Residues Cys404, Cys407, Cys422, and Cys428 each contribute to the Zn(2+) site. Residues 585 to 663 (FIDNKLAGKT…SEDEFLKMIE (79 aa)) enclose the BRCT domain.

This sequence belongs to the NAD-dependent DNA ligase family. LigA subfamily. It depends on Mg(2+) as a cofactor. Requires Mn(2+) as cofactor.

The enzyme catalyses NAD(+) + (deoxyribonucleotide)n-3'-hydroxyl + 5'-phospho-(deoxyribonucleotide)m = (deoxyribonucleotide)n+m + AMP + beta-nicotinamide D-nucleotide.. In terms of biological role, DNA ligase that catalyzes the formation of phosphodiester linkages between 5'-phosphoryl and 3'-hydroxyl groups in double-stranded DNA using NAD as a coenzyme and as the energy source for the reaction. It is essential for DNA replication and repair of damaged DNA. The polypeptide is DNA ligase (Azobacteroides pseudotrichonymphae genomovar. CFP2).